A 647-amino-acid chain; its full sequence is Pre-mRNA-splicing factor SLU7 (647 aa).

The span at 1-19 shows a compositional bias: polar residues; sequence MASYKQNLPPSALIKQQVN. Positions 1 to 44 are disordered; that stretch reads MASYKQNLPPSALIKQQVNVADKKSKAEVQRDRQLEEDRKAGTA. Positions 21-41 are enriched in basic and acidic residues; it reads ADKKSKAEVQRDRQLEEDRKA. A CCHC-type zinc finger spans residues 113 to 130; it reads GACENCGAMGHQKRDCFD. 2 disordered regions span residues 193 to 212 and 465 to 620; these read HEMK…APKD and EVKE…KEME. The segment covering 465 to 479 has biased composition (basic and acidic residues); the sequence is EVKEEKEKEDSIKDE. A compositionally biased stretch (acidic residues) spans 480–491; sequence VAEENSDNDNDE. The span at 513 to 533 shows a compositional bias: basic and acidic residues; the sequence is EKEREKERLIEKERRERDQRR. Residues 534–555 show a composition bias toward basic residues; sequence RDKKREKRERKKAKLGKRKRRH. Residues 588–606 show a composition bias toward basic and acidic residues; the sequence is EKAEGMKAAREGDRGRKYN.

Belongs to the SLU7 family.

It localises to the nucleus. Its function is as follows. Participates in the second catalytic step of pre-mRNA splicing, when the free hydroxyl group of exon I attacks the 3'-splice site to generate spliced mRNA and the excised lariat intron. The chain is Pre-mRNA-splicing factor SLU7 from Caenorhabditis elegans.